A 210-amino-acid chain; its full sequence is Probable peroxygenase 7 (210 aa).

Positions 1–24 are disordered; it reads MSHQTVALASKAKSPKPKRGKLDK. Positions 25–60 constitute an EF-hand domain; sequence EKMTALEKHVSFFDRNKDGTVYPWETYQGFRALGTG. Residue H33 participates in heme binding. Ca(2+) contacts are provided by D38, N40, D42, T44, and E49. The Proline-knot signature appears at 81-90; the sequence is PGKGFSPLFP. At S188 the chain carries Phosphoserine.

This sequence belongs to the caleosin family. Homodimer. Heme b is required as a cofactor. It depends on Ca(2+) as a cofactor. In terms of tissue distribution, expressed in pollen coat.

Its subcellular location is the secreted. It carries out the reaction RH + ROOH = ROH + ROH.. Functionally, probable calcium-binding peroxygenase. May be involved in pollination. The protein is Probable peroxygenase 7 (PXG7) of Arabidopsis thaliana (Mouse-ear cress).